Here is a 271-residue protein sequence, read N- to C-terminus: Transmembrane protein 150A (271 aa).

At 1–2 the chain is on the cytoplasmic side; that stretch reads MT. Residues 3–23 traverse the membrane as a helical segment; it reads AWILLPVSLSAFSITGIWTVY. The Extracellular portion of the chain corresponds to 24-75; sequence AMAVMNHHVCPVENWSYNESCPPDPAEQGGPKTCCTLDDVPLISKCGSYPPE. Asn-37 and Asn-41 each carry an N-linked (GlcNAc...) asparagine glycan. The chain crosses the membrane as a helical span at residues 76 to 96; that stretch reads SCLFSLIGNMGAFMVALICLL. Residues 97–108 are Cytoplasmic-facing; it reads RYGQLLEQSRHS. Residues 109–129 form a helical membrane-spanning segment; that stretch reads WVNTTALITGCTNAAGLLVVG. Over 130 to 140 the chain is Extracellular; it reads NFQVDHARSLH. The chain crosses the membrane as a helical span at residues 141–161; the sequence is YVGAGVAFPAGLLFVCLHCAL. Residues 162–178 are Cytoplasmic-facing; it reads SYQGATAPLDLAVAYLR. Residues 179 to 199 form a helical membrane-spanning segment; it reads SVLAVIAFITLVLSGVFFVHE. The Extracellular segment spans residues 200-211; sequence SSQLQHGAALCE. Residues 212 to 232 traverse the membrane as a helical segment; sequence WVCVIDILIFYGTFSYEFGAV. Residues 233-271 lie on the Cytoplasmic side of the membrane; sequence SSDTLVAALQPTPGRACKSSGSSSTSTHLNCAPESIAMI.

The protein belongs to the DRAM/TMEM150 family. In terms of assembly, interacts (via C-terminal cytoplasmic tail) with PI4KA.

It is found in the cell membrane. In terms of biological role, regulates localization of phosphatidylinositol 4-kinase (PI4K) to the plasma membrane, possibly by reducing the association of TTC7 (TTC7A or TTC7B) with the PI4K complex. Acts as a regulator of phosphatidylinositol 4-phosphate (PtdIns(4)P) synthesis. May also play a role in fasting-induced catabolism. The polypeptide is Transmembrane protein 150A (TMEM150A) (Homo sapiens (Human)).